The sequence spans 492 residues: MAADTGSWCVYAVLRFFYSLFFPGLMICGVLCVYLVIGLWVIRWHLQRKKKSVSTSKNGKEQTVVAFFHPYCNAGGGGERVLWCALRALQKKYPEAVYVVYTGDINVSGQQILDGAFRRFNIKLAHPVQFVFLRKRYLVEDSRYPHFTLLGQSLGSILLGWEALMQRVPDVYIDSMGYAFTLPLFKYVGGCRVGSYVHYPTISTDMLSVVKNQNPGFNNAAFISRNALLSKAKLIYYYLFAFVYGLVGSCSDIVMVNSSWTLNHILSLWKVGHCTNIVYPPCDVQTFLDIPLHEKKVTPGHLLVSIGQFRPEKNHALQIKAFAKLLNEKAAELGHSLKLVLIGGCRNKDDEFRVNQLRSLSENLGVQENVEFKINISFDELKNYLSEATIGLHTMWNEHFGIGVVECMAAGTVILAHNSGGPKLDIVIPHEGQITGFLAESEEGYADSMAHILSLSAEERLQIRKNARASISRFSDQEFEVAFLCSMEKLLT.

Residues 1-19 lie on the Lumenal side of the membrane; sequence MAADTGSWCVYAVLRFFYS. A helical transmembrane segment spans residues 20 to 40; it reads LFFPGLMICGVLCVYLVIGLW. Topologically, residues 41-233 are cytoplasmic; that stretch reads VIRWHLQRKK…SRNALLSKAK (193 aa). Positions 234-254 form an intramembrane region, helical; it reads LIYYYLFAFVYGLVGSCSDIV. Residues 255–399 lie on the Cytoplasmic side of the membrane; that stretch reads MVNSSWTLNH…IGLHTMWNEH (145 aa). The segment at residues 400 to 420 is an intramembrane region (helical); that stretch reads FGIGVVECMAAGTVILAHNSG. Topologically, residues 421–492 are cytoplasmic; that stretch reads GPKLDIVIPH…FLCSMEKLLT (72 aa).

The protein belongs to the glycosyltransferase group 1 family. Glycosyltransferase 4 subfamily.

The protein resides in the endoplasmic reticulum membrane. It carries out the reaction an alpha-D-Man-(1-&gt;3)-[alpha-D-Man-(1-&gt;6)]-beta-D-Man-(1-&gt;4)-beta-D-GlcNAc-(1-&gt;4)-alpha-D-GlcNAc-diphospho-di-trans,poly-cis-dolichol + 2 GDP-alpha-D-mannose = an alpha-D-Man-(1-&gt;2)-alpha-D-Man-(1-&gt;2)-alpha-D-Man-(1-&gt;3)-[alpha-D-Man-(1-&gt;6)]-beta-D-Man-(1-&gt;4)-beta-D-GlcNAc-(1-&gt;4)-alpha-D-GlcNAc-diphospho-di-trans,poly-cis-dolichol + 2 GDP + 2 H(+). The protein operates within protein modification; protein glycosylation. In terms of biological role, GDP-Man:Man(3)GlcNAc(2)-PP-Dol alpha-1,2-mannosyltransferase that operates in the biosynthetic pathway of dolichol-linked oligosaccharides, the glycan precursors employed in protein asparagine (N)-glycosylation. The assembly of dolichol-linked oligosaccharides begins on the cytosolic side of the endoplasmic reticulum membrane and finishes in its lumen. The sequential addition of sugars to dolichol pyrophosphate produces dolichol-linked oligosaccharides containing fourteen sugars, including two GlcNAcs, nine mannoses and three glucoses. Once assembled, the oligosaccharide is transferred from the lipid to nascent proteins by oligosaccharyltransferases. Catalyzes, on the cytoplasmic face of the endoplasmic reticulum, the addition of the fourth and fifth mannose residues to the dolichol-linked oligosaccharide chain, to produce Man(5)GlcNAc(2)-PP-dolichol core oligosaccharide. Man(5)GlcNAc(2)-PP-dolichol is a substrate for ALG3, the following enzyme in the biosynthetic pathway. This is GDP-Man:Man(3)GlcNAc(2)-PP-Dol alpha-1,2-mannosyltransferase from Mus musculus (Mouse).